The following is a 102-amino-acid chain: Small ribosomal subunit protein uS10 (102 aa).

This sequence belongs to the universal ribosomal protein uS10 family. As to quaternary structure, part of the 30S ribosomal subunit.

Its function is as follows. Involved in the binding of tRNA to the ribosomes. The polypeptide is Small ribosomal subunit protein uS10 (Thermosipho melanesiensis (strain DSM 12029 / CIP 104789 / BI429)).